We begin with the raw amino-acid sequence, 126 residues long: Protein Wnt-1 (126 aa).

The O-palmitoleoyl serine; by PORCN moiety is linked to residue Ser-1. An intrachain disulfide couples Cys-92 to Cys-107. 2 N-linked (GlcNAc...) asparagine glycosylation sites follow: Asn-93 and Asn-94.

This sequence belongs to the Wnt family. In terms of processing, palmitoleoylation is required for efficient binding to frizzled receptors. Palmitoleoylation is necessary for proper trafficking to cell surface. Depalmitoleoylated by NOTUM, leading to inhibit Wnt signaling pathway.

It localises to the secreted. The protein localises to the extracellular space. The protein resides in the extracellular matrix. Its function is as follows. Ligand for members of the frizzled family of seven transmembrane receptors. Probable developmental protein. The polypeptide is Protein Wnt-1 (WNT-1) (Alopias vulpinus (Common thresher shark)).